The sequence spans 264 residues: 5'-nucleotidase SurE (264 aa).

Positions 10, 11, 43, and 99 each coordinate a divalent metal cation.

It belongs to the SurE nucleotidase family. The cofactor is a divalent metal cation.

The protein resides in the cytoplasm. It catalyses the reaction a ribonucleoside 5'-phosphate + H2O = a ribonucleoside + phosphate. In terms of biological role, nucleotidase that shows phosphatase activity on nucleoside 5'-monophosphates. This Methanococcus maripaludis (strain C5 / ATCC BAA-1333) protein is 5'-nucleotidase SurE.